The following is a 207-amino-acid chain: Guanylate kinase (207 aa).

The Guanylate kinase-like domain maps to 5 to 184 (GNLFIVSAPS…ALADLRAIIR (180 aa)). Residue 12-19 (APSGAGKS) participates in ATP binding.

The protein belongs to the guanylate kinase family.

It is found in the cytoplasm. The catalysed reaction is GMP + ATP = GDP + ADP. In terms of biological role, essential for recycling GMP and indirectly, cGMP. The polypeptide is Guanylate kinase (Shewanella sp. (strain MR-7)).